Consider the following 457-residue polypeptide: Multidrug resistance protein MdtK (457 aa).

12 helical membrane-spanning segments follow: residues 11-31, 53-73, 93-113, 127-147, 160-180, 189-209, 243-263, 276-296, 314-334, 350-370, 387-407, and 418-438; these read LLAL…MGFV, IWLP…PVIA, WLAG…GYII, AVGY…FQVA, GMVM…IFIY, GGVG…LAMV, LPIA…ALLV, IALN…AAVT, AART…IFTV, VVTL…SDSI, IFYI…YILA, and PAGF…MMML.

The protein belongs to the multi antimicrobial extrusion (MATE) (TC 2.A.66.1) family. MdtK subfamily.

The protein localises to the cell inner membrane. Multidrug efflux pump that functions probably as a Na(+)/drug antiporter. The sequence is that of Multidrug resistance protein MdtK from Escherichia coli O9:H4 (strain HS).